We begin with the raw amino-acid sequence, 286 residues long: Divergent deoxyribose-phosphate aldolase-like protein (286 aa).

As to quaternary structure, homodimer. Interacts with ADF; the interaction enhances ADF activity in disassembly of filamentous actin and inhibition of actin polymerization.

It localises to the cytoplasm. Functionally, involved in regulation of actin dynamics. The sequence is that of Divergent deoxyribose-phosphate aldolase-like protein from Toxoplasma gondii.